Consider the following 363-residue polypeptide: 3,4-dihydroxy-2-butanone 4-phosphate synthase (363 aa).

The DHBP synthase stretch occupies residues 1-202 (MSHISPIPEI…IADLIEYRSR (202 aa)). D-ribulose 5-phosphate is bound by residues 28-29 (RE), Asp-33, 141-145 (RAGHT), and Glu-165. Residue Glu-29 coordinates Mg(2+). His-144 contributes to the Mg(2+) binding site. The tract at residues 205-363 (SLLEDMGNAP…EVVGFEEAEK (159 aa)) is GTP cyclohydrolase II-like.

The protein in the N-terminal section; belongs to the DHBP synthase family. This sequence in the C-terminal section; belongs to the GTP cyclohydrolase II family. It depends on Mg(2+) as a cofactor. Requires Mn(2+) as cofactor.

It catalyses the reaction D-ribulose 5-phosphate = (2S)-2-hydroxy-3-oxobutyl phosphate + formate + H(+). Its pathway is cofactor biosynthesis; riboflavin biosynthesis; 2-hydroxy-3-oxobutyl phosphate from D-ribulose 5-phosphate: step 1/1. In terms of biological role, catalyzes the conversion of D-ribulose 5-phosphate to formate and 3,4-dihydroxy-2-butanone 4-phosphate. The sequence is that of 3,4-dihydroxy-2-butanone 4-phosphate synthase (ribB) from Neisseria meningitidis serogroup B (strain ATCC BAA-335 / MC58).